The sequence spans 859 residues: Toll-like receptor 5 (859 aa).

Positions 1–26 (MACQLDLLIGVIFMASPVLVISPCSS) are cleaved as a signal peptide. The Extracellular segment spans residues 27-641 (DGRIAFFRGC…EEEAMRSLKF (615 aa)). N-linked (GlcNAc...) asparagine glycosylation is found at asparagine 37, asparagine 46, and asparagine 84. LRR repeat units lie at residues 45–69 (LNTTTERLLLSFNYISMVVATSFPL), 72–94 (RLQLLELGTQYANLTIGPGAFRN), 96–118 (PNLRILDLGQSQIEVLNRDAFQG), 121–144 (HLLELRLFSCGLSSAVLSDGYFRN), 147–167 (SLARLDLSGNQIHSLRLHSSF), 172–193 (SLSDVNFAFNQIFTICEDELEP), 198–212 (TLSFFGLKLTKLFSR), 215–230 (VGWETCRNPFRGVRLE), and 235–236 (SE). Asparagine 246 carries an N-linked (GlcNAc...) asparagine glycan. 6 LRR repeats span residues 261–285 (LKHHIMGPGFGFQNIRDPDQSTFAS), 290–302 (SVLQLDLSHGFIF), 314–335 (DLKMLNLAFNKINKIGENAFYG), 338–356 (SLQVLNLSYNLLGELYNSN), 386–402 (TLQTLDLRDNALKAIGF), and 413–432 (GNKLVHLPHIHFTANFLELS). Residue asparagine 343 is glycosylated (N-linked (GlcNAc...) asparagine). A glycan (N-linked (GlcNAc...) asparagine) is linked at asparagine 438. LRR repeat units follow at residues 450–471 (QLQFLILNQNRLSSCKAAHTPS), 475–496 (SLEQLFLTENMLQLAWETGLCW), 504–525 (RLQILYLSNNYLNFLPPGIFND), 528–547 (ALRMLSLSANKLTVLSPGSL), and 550–568 (NLEILDISRNQLLCPDPAL). One can recognise an LRRCT domain in the interval 580-632 (NEFVCNCELSTFISWLNQTNVTLFGSPADVYCMYPNSLLGGSLYNISTEDCDE). 2 disulfides stabilise this stretch: cysteine 584/cysteine 611 and cysteine 586/cysteine 630. Asparagine 596, asparagine 599, and asparagine 624 each carry an N-linked (GlcNAc...) asparagine glycan. A helical transmembrane segment spans residues 642 to 662 (SLFILCTVTLTLFLVITLVVI). Topologically, residues 663 to 859 (KFRGICFLCY…IQLRTIATIS (197 aa)) are cytoplasmic. Residues 692–837 (YRYDAYFCFS…WFLDKLSGCI (146 aa)) enclose the TIR domain. At tyrosine 799 the chain carries Phosphotyrosine.

It belongs to the Toll-like receptor family. Homodimer. Interacts with MYD88 (via TIR domain). Interacts with TICAM1 (via TIR domain). Interacts with UNC93B1; this interaction is essential for proper TLR5 localization to the plasma membrane. In terms of processing, phosphorylated at Tyr-799 upon flagellin binding; required for signaling. Highly expressed in liver. Detected in lung and at very low levels in most other tissues.

It is found in the membrane. In terms of biological role, pattern recognition receptor (PRR) located on the cell surface that participates in the activation of innate immunity and inflammatory response. Recognizes small molecular motifs named pathogen-associated molecular pattern (PAMPs) expressed by pathogens and microbe-associated molecular patterns (MAMPs) usually expressed by resident microbiota. Upon ligand binding such as bacterial flagellins, recruits intracellular adapter proteins MYD88 and TRIF leading to NF-kappa-B activation, cytokine secretion and induction of the inflammatory response. Plays thereby an important role in the relationship between the intestinal epithelium and enteric microbes and contributes to the gut microbiota composition throughout life. The polypeptide is Toll-like receptor 5 (Tlr5) (Mus musculus (Mouse)).